The following is an 858-amino-acid chain: Magnesium transporter ALR2 (858 aa).

The span at 1–14 shows a compositional bias: low complexity; sequence MSSLSTSFDSSSDL. Disordered stretches follow at residues 1–81, 318–337, and 365–396; these read MSSL…NGGY, TYNH…TSGS, and NNES…EGND. Topologically, residues 1 to 741 are cytoplasmic; the sequence is MSSLSTSFDS…NNKVTEMLGK (741 aa). Positions 46 to 61 are enriched in basic and acidic residues; it reads PIRHEALALKVDETKD. Positions 67–81 are enriched in low complexity; the sequence is SSSNGENSGVENGGY. Basic and acidic residues-rich tracts occupy residues 367-379 and 386-395; these read ESVR…DLHP and NKIEGEKEGN. Residues 742–762 traverse the membrane as a helical segment; it reads VTMLGTMLVPLNVITGLFGMN. Residues 763-771 are Extracellular-facing; sequence VKVPGRNGS. The helical transmembrane segment at 772 to 792 threads the bilayer; that stretch reads IAWWYGILGVLLLLAVISWFL. Residues 793 to 858 lie on the Cytoplasmic side of the membrane; it reads ASYWIKKIDP…SLPSRYSRYN (66 aa).

Belongs to the CorA metal ion transporter (MIT) (TC 1.A.35) family.

The protein resides in the cell membrane. In terms of biological role, plasma membrane magnesium transporter. In Saccharomyces cerevisiae (strain ATCC 204508 / S288c) (Baker's yeast), this protein is Magnesium transporter ALR2 (ALR2).